Here is a 274-residue protein sequence, read N- to C-terminus: S-adenosylmethionine decarboxylase proenzyme (274 aa).

The active-site Schiff-base intermediate with substrate; via pyruvic acid is Ser119. Ser119 bears the Pyruvic acid (Ser); by autocatalysis mark. Catalysis depends on His124, which acts as the Proton acceptor; for processing activity. Catalysis depends on Cys147, which acts as the Proton donor; for catalytic activity.

It belongs to the prokaryotic AdoMetDC family. Type 2 subfamily. In terms of assembly, heterooctamer of four alpha and four beta chains arranged as a tetramer of alpha/beta heterodimers. Pyruvate serves as cofactor. In terms of processing, is synthesized initially as an inactive proenzyme. Formation of the active enzyme involves a self-maturation process in which the active site pyruvoyl group is generated from an internal serine residue via an autocatalytic post-translational modification. Two non-identical subunits are generated from the proenzyme in this reaction, and the pyruvate is formed at the N-terminus of the alpha chain, which is derived from the carboxyl end of the proenzyme. The post-translation cleavage follows an unusual pathway, termed non-hydrolytic serinolysis, in which the side chain hydroxyl group of the serine supplies its oxygen atom to form the C-terminus of the beta chain, while the remainder of the serine residue undergoes an oxidative deamination to produce ammonia and the pyruvoyl group blocking the N-terminus of the alpha chain.

It catalyses the reaction S-adenosyl-L-methionine + H(+) = S-adenosyl 3-(methylsulfanyl)propylamine + CO2. It functions in the pathway amine and polyamine biosynthesis; S-adenosylmethioninamine biosynthesis; S-adenosylmethioninamine from S-adenosyl-L-methionine: step 1/1. In terms of biological role, catalyzes the decarboxylation of S-adenosylmethionine to S-adenosylmethioninamine (dcAdoMet), the propylamine donor required for the synthesis of the polyamines spermine and spermidine from the diamine putrescine. This chain is S-adenosylmethionine decarboxylase proenzyme, found in Clostridium acetobutylicum (strain ATCC 824 / DSM 792 / JCM 1419 / IAM 19013 / LMG 5710 / NBRC 13948 / NRRL B-527 / VKM B-1787 / 2291 / W).